The chain runs to 1764 residues: Latent-transforming growth factor beta-binding protein 2 (1764 aa).

An N-terminal signal peptide occupies residues 1 to 35; the sequence is MRAPTTVRCSGRIQRARWRGFLPLVLALLMGTSHA. The tract at residues 80 to 140 is disordered; it reads PGLSPSEWNQ…PPAARTAHSV (61 aa). The segment at 94-115 is heparin-binding; it reads IPGRLAEAEARRPSRAQQLRRV. The segment covering 108–128 has biased composition (polar residues); sequence RAQQLRRVQSPVQTRRSNPRG. Asn175 is a glycosylation site (N-linked (GlcNAc...) asparagine). The 33-residue stretch at 181 to 213 folds into the EGF-like 1 domain; the sequence is IKPVCQPPCQNRGSCSRPQLCICRSGFRGARCE. 3 cysteine pairs are disulfide-bonded: Cys185/Cys195, Cys189/Cys201, and Cys203/Cys212. The segment at 220 to 279 is disordered; the sequence is EFDPQNARPVPRRSVEGAPGPHRSSEARGSLVTRIQPLLPPLPPPPSRTLSQTRPLQQHA. Residues 226–243 are heparin-binding; it reads ARPVPRRSVEGAPGPHRS. Residues 257-266 are compositionally biased toward pro residues; sequence LLPPLPPPPS. N-linked (GlcNAc...) asparagine glycosylation is present at Asn330. Position 331 to 341 (331 to 341) interacts with heparin; that stretch reads LTEKIKKIKVV. In terms of domain architecture, EGF-like 2 spans 383-415; the sequence is RIYFCQIPCLNGGRCIGRDECWCPANSTGKFCH. Intrachain disulfides connect Cys387–Cys397, Cys391–Cys403, and Cys405–Cys414. Asn408 carries N-linked (GlcNAc...) asparagine glycosylation. Positions 484-529 are disordered; sequence EVDPVPEDNSVETRASHRPHGSSGHSHWASNSIPARAGEAPRPPPV. A Phosphoserine modification is found at Ser493. Residues 538-590 form the TB 1 domain; that stretch reads GQCYLSTVNGQCANPLGELTSQEDCCGSVGTSWGVTSCAPCPPRPAFPVIENG. 3 cysteine pairs are disulfide-bonded: Cys540-Cys562, Cys549-Cys575, and Cys563-Cys578. N-linked (GlcNAc...) asparagine glycosylation occurs at Asn602. The region spanning 608–648 is the EGF-like 3; calcium-binding domain; the sequence is DINECLTLGLCKDSECVNTRGSYLCTCRPGLMLDPSRSRCV. Disulfide bonds link Cys612–Cys623, Cys618–Cys632, Cys634–Cys647, Cys660–Cys682, Cys669–Cys695, Cys683–Cys698, and Cys684–Cys710. The TB 2 domain occupies 658-710; the sequence is GLCYRSMVSGTCTLPLVQRITKQICCCSRVGKAWGSKCEHCPLPGTEAFREIC. Disordered regions lie at residues 729–759 and 786–809; these read KAEE…RQPL and SAPH…LPGQ. Positions 834–876 constitute an EGF-like 4 domain; sequence GFDPCFAGASNICGPGTCVKLPNGYRCVCSPGYQLHPSQDYCT. Disulfide bonds link Cys838-Cys851, Cys846-Cys860, Cys862-Cys875, Cys881-Cys892, Cys886-Cys901, Cys903-Cys918, Cys924-Cys935, Cys930-Cys944, Cys946-Cys958, Cys964-Cys975, Cys970-Cys984, Cys987-Cys998, Cys1004-Cys1015, Cys1010-Cys1024, Cys1026-Cys1039, Cys1045-Cys1056, Cys1051-Cys1065, Cys1068-Cys1081, Cys1087-Cys1098, Cys1093-Cys1107, Cys1110-Cys1123, Cys1129-Cys1141, Cys1136-Cys1150, Cys1152-Cys1164, Cys1170-Cys1182, Cys1176-Cys1191, Cys1193-Cys1206, Cys1212-Cys1223, Cys1218-Cys1232, Cys1234-Cys1247, Cys1253-Cys1265, Cys1259-Cys1274, Cys1276-Cys1289, Cys1295-Cys1307, Cys1302-Cys1316, Cys1318-Cys1332, Cys1359-Cys1382, Cys1369-Cys1394, Cys1383-Cys1397, Cys1435-Cys1448, Cys1443-Cys1457, Cys1459-Cys1472, Cys1478-Cys1488, Cys1483-Cys1497, and Cys1499-Cys1512. Positions 877-919 constitute an EGF-like 5; calcium-binding domain; sequence DDNECLRNPCEGRGRCVNSVGSYSCLCYPGYTLATLGDTQECQ. Residues 920 to 959 enclose the EGF-like 6; calcium-binding domain; it reads DVDECEQPGVCSGGRCSNTEGSYHCECDQGYVMVRRGHCQ. Residues 960 to 999 form the EGF-like 7; calcium-binding domain; it reads DINECRHPGTCPDGRCVNSPGSYTCLACEEGYIGQSGNCV. In terms of domain architecture, EGF-like 8; calcium-binding spans 1000-1040; it reads DMNECLTPGICAHGRCINMEGSFRCSCEPGYELTPDKKGCR. An EGF-like 9; calcium-binding domain is found at 1041–1082; sequence DVDECASRASCPTGLCLNTEGSFTCSACQSGYWVNEDGTACE. Positions 1083–1124 constitute an EGF-like 10; calcium-binding domain; that stretch reads DLDECAFPGVCPTGVCTNTVGSFSCKDCDRGFRPSPLGNSCE. The EGF-like 11; calcium-binding domain occupies 1125-1165; that stretch reads DVDECEGPQNSCLGGECKNTDGSYQCLCPQGFQLANGTVCE. N-linked (GlcNAc...) asparagine glycosylation is present at Asn1160. One can recognise an EGF-like 12; calcium-binding domain in the interval 1166-1207; the sequence is DVDECVGEEHCAPHGECLNSPGSFFCLCAPGFASAEGGTRCQ. An EGF-like 13; calcium-binding domain is found at 1208-1248; that stretch reads DVDECATTEPCLGGHCVNTEGSFNCLCETGFQPAPDSGECV. Positions 1249-1290 constitute an EGF-like 15; calcium-binding domain; that stretch reads DIDECANDTVCGNHGFCDNTDGSFRCLCDQGFETSPSGWECV. An N-linked (GlcNAc...) asparagine glycan is attached at Asn1255. Residues 1291–1333 enclose the EGF-like 16; calcium-binding domain; it reads DVNECELMLAVCGDALCENVEGSFLCLCASDLEEYDAEEGHCR. The TB 3 domain occupies 1357-1409; that stretch reads MECYAEHNGGPPCSQILGQNSTQAECCSTQGARWGETCDPCPSEDSVEFSELC. Asn1376 is a glycosylation site (N-linked (GlcNAc...) asparagine). Positions 1431–1473 constitute an EGF-like 17; calcium-binding domain; that stretch reads DADECILFGPALCQNGRCLNTVPGYICLCNPGYHYDAVSRKCQ. Positions 1474–1513 constitute an EGF-like 18; calcium-binding domain; that stretch reads DHNECQDLACENGECVNTEGSFHCFCSPPLILDLSGQRCV. Asn1514 is a glycosylation site (N-linked (GlcNAc...) asparagine). A TB 4 domain is found at 1530–1582; sequence DICWKKVTNDVCSQPLRGHHTTYTECCCQDGEAWSQQCALCPPRSSEVYAQLC. 10 cysteine pairs are disulfide-bonded: Cys1532-Cys1555, Cys1541-Cys1567, Cys1556-Cys1570, Cys1557-Cys1582, Cys1680-Cys1691, Cys1686-Cys1700, Cys1702-Cys1715, Cys1721-Cys1736, Cys1731-Cys1745, and Cys1747-Cys1760. Residues 1585 to 1764 form a C-terminal domain region; it reads ARIEAEREAG…PGPPHCAAKE (180 aa). The 41-residue stretch at 1676–1716 folds into the EGF-like 19; calcium-binding domain; that stretch reads QAEECGILNGCENGRCVRVREGYTCDCFEGFQLDTALMACV. The EGF-like 20; calcium-binding domain occupies 1717-1761; it reads DVNECEDLNGAARLCAHGHCENTEGSYRCHCSPGYVAEPGPPHCA.

The protein belongs to the LTBP family. As to quaternary structure, forms part of the large latent transforming growth factor beta precursor complex; removal is essential for activation of complex. Interacts with SDC4. Interacts (via C-terminal domain) with FBN1 (via N-terminal domain) in a Ca(+2)-dependent manner. In terms of processing, N-Glycosylated. Post-translationally, contains hydroxylated asparagine residues. In terms of tissue distribution, expressed in cortical astrocytes and glioma cells. Expression is up-regulated by TGFB1.

The protein resides in the secreted. It localises to the extracellular space. Its subcellular location is the extracellular matrix. In terms of biological role, may play an integral structural role in elastic-fiber architectural organization and/or assembly. The polypeptide is Latent-transforming growth factor beta-binding protein 2 (Ltbp2) (Rattus norvegicus (Rat)).